A 174-amino-acid chain; its full sequence is Nucleoside-triphosphatase THEP1 (174 aa).

Residues 7-14 (GRPGSGKS) and 98-105 (CIIIDEIG) each bind ATP.

This sequence belongs to the THEP1 NTPase family.

The enzyme catalyses a ribonucleoside 5'-triphosphate + H2O = a ribonucleoside 5'-diphosphate + phosphate + H(+). Its function is as follows. Has nucleotide phosphatase activity towards ATP, GTP, CTP, TTP and UTP. May hydrolyze nucleoside diphosphates with lower efficiency. This chain is Nucleoside-triphosphatase THEP1, found in Methanothermobacter thermautotrophicus (strain ATCC 29096 / DSM 1053 / JCM 10044 / NBRC 100330 / Delta H) (Methanobacterium thermoautotrophicum).